A 339-amino-acid chain; its full sequence is ADP,ATP carrier protein (339 aa).

Solcar repeat units follow at residues 39–133 (MAFV…IKGL), 145–234 (RFFV…AKGV), and 246–328 (AKWA…IKKF). 5 helical membrane-spanning segments follow: residues 41-70 (FVKD…LLLQ), 110-134 (LANV…KGLF), 144-164 (WRFF…SLLI), 212-232 (VSVQ…DTAK), and 245-265 (FAKW…SYPF). The ADP site is built by R115 and K127. R269 is an ADP binding site. The segment at 269-274 (RRRLMM) is important for transport activity. The short motif at 269 to 274 (RRRLMM) is the Nucleotide carrier signature motif element. Residues 305–322 (AWSNVLRGAGGAFVLVLY) traverse the membrane as a helical segment.

This sequence belongs to the mitochondrial carrier (TC 2.A.29) family. As to quaternary structure, monomer.

The protein resides in the mitochondrion inner membrane. The enzyme catalyses ADP(in) + ATP(out) = ADP(out) + ATP(in). The matrix-open state (m-state) is inhibited by the membrane-permeable bongkrekic acid (BKA). The cytoplasmic-open state (c-state) is inhibited by the membrane-impermeable toxic inhibitor carboxyatractyloside (CATR). Functionally, ADP:ATP antiporter that mediates import of ADP into the mitochondrial matrix for ATP synthesis, and export of ATP out to fuel the cell. Cycles between the cytoplasmic-open state (c-state) and the matrix-open state (m-state): operates by the alternating access mechanism with a single substrate-binding site intermittently exposed to either the cytosolic (c-state) or matrix (m-state) side of the inner mitochondrial membrane. This is ADP,ATP carrier protein from Parachlorella kessleri (Green alga).